A 308-amino-acid polypeptide reads, in one-letter code: Reticulon-like protein 1 (308 aa).

Composition is skewed to polar residues over residues 1 to 17 (MSEQ…SVTA) and 41 to 66 (PSTE…IQNI). Disordered stretches follow at residues 1 to 22 (MSEQ…DVAA) and 41 to 92 (PSTE…CPVS). A glycan (N-linked (GlcNAc...) asparagine) is linked at Asn65. Positions 67–81 (SSSSSEPHHTSQSTP) are enriched in low complexity. N-linked (GlcNAc...) asparagine glycans are attached at residues Asn113 and Asn135. The 182-residue stretch at 127-308 (LWSVLTWKNT…TETINTTVNK (182 aa)) folds into the Reticulon domain. 4 helical membrane-spanning segments follow: residues 138 to 158 (CSFS…WINL), 166 to 186 (FRYV…ASNG), 233 to 253 (PILT…SGFL), and 255 to 275 (YKSL…LYVC). Asn303 is a glycosylation site (N-linked (GlcNAc...) asparagine).

As to quaternary structure, interacts with TTS1 and YOP1.

Its subcellular location is the endoplasmic reticulum membrane. It is found in the nucleus membrane. Functionally, required for the correct positioning of the cellular division plane by delimiting the actomyosin ring assembly at the cell equator. Overexpression causes cell lysis. The polypeptide is Reticulon-like protein 1 (rtn1) (Schizosaccharomyces pombe (strain 972 / ATCC 24843) (Fission yeast)).